We begin with the raw amino-acid sequence, 235 residues long: MAVEDTPKSVVTEEAKPNSIENPIDRYHEEGDDAEEGEIAGGEGDGNVDESSKSGVPESHPLEHSWTFWFDNPAVKSKQTSWGSSLRPVFTFSTVEEFWSLYNNMKHPSKLAHGADFYCFKHIIEPKWEDPICANGGKWTMTFPKEKSDKSWLYTLLALIGEQFDHGDEICGAVVNIRGKQERISIWTKNASNEAAQVSIGKQWKEFLDYNNSIGFIIHEDAKKLDRNAKNAYTA.

Positions 1 to 16 are enriched in basic and acidic residues; the sequence is MAVEDTPKSVVTEEAK. Residues 1–59 are disordered; the sequence is MAVEDTPKSVVTEEAKPNSIENPIDRYHEEGDDAEEGEIAGGEGDGNVDESSKSGVPES. 2 EIF4G-binding regions span residues 60–63 and 70–106; these read HPLE and FDNP…NNMK. Residues 78–83, K110, and 128–129 each bind mRNA; these read KQTSWG and WE. An intrachain disulfide couples C133 to C171. The tract at residues 154–163 is EIF4G-binding; it reads YTLLALIGEQ. Residues 178–183 and 223–227 contribute to the mRNA site; these read RGKQER and KKLDR.

This sequence belongs to the eukaryotic initiation factor 4E family. In terms of assembly, EIF4F is a multi-subunit complex, the composition of which varies with external and internal environmental conditions. It is composed of at least EIF4A, EIF4E and EIF4G. EIF4E is also known to interact with other partners. In higher plants two isoforms of EIF4F have been identified, named isoform EIF4F and isoform EIF(iso)4F. Isoform EIF4F has subunits p220 and p26, whereas isoform EIF(iso)4F has subunits p82 and p28. Interacts directly with EXA1. As to quaternary structure, (Microbial infection) Interacts with viral genome-linked protein (VPg); this interaction is possible in susceptible hosts but impaired in resistant plants. In terms of processing, according to the redox status, the Cys-133-Cys-171 disulfide bridge may have a role in regulating protein function by affecting its ability to bind capped mRNA. In terms of tissue distribution, expressed in all tissues except in the cells of the specialization zone of the roots.

The protein resides in the nucleus. Its subcellular location is the cytoplasm. Its function is as follows. Component of the protein complex eIF4F, which is involved in the recognition of the mRNA cap, ATP-dependent unwinding of 5'-terminal secondary structure and recruitment of mRNA to the ribosome. Recognizes and binds the 7-methylguanosine-containing mRNA cap during an early step in the initiation of protein synthesis and facilitates ribosome binding by inducing the unwinding of the mRNAs secondary structures. Key component of recessive resistance to potyviruses. (Microbial infection) Susceptibility host factor required for viral infection by recruiting viral RNAs to the host ribosomal complex via an interaction with viral genome-linked protein (VPg). The sequence is that of Eukaryotic translation initiation factor 4E-1 from Arabidopsis thaliana (Mouse-ear cress).